We begin with the raw amino-acid sequence, 226 residues long: MSGSLPLRLVLASASPARRKTLQAAGIEPDVLVSGVDESLVASDRADELCLELARLKAQAVLTRLRPAQDQRTLVIGCDSVLEFDGQIFGKPADSADAIHRWERMRGRSGVLHSGHCLVDVTAGRRAEAVASTTVHFAAVSDDEIATYVATGEPLVVAGAFTIDGLGGPFVERIEGDPGTVVGLSLPLLRRLLAELNLPITGLWSRGTSTHPTPGTSATPKPNPGA.

Residue Asp-79 is the Proton acceptor of the active site. The interval 204-226 is disordered; that stretch reads WSRGTSTHPTPGTSATPKPNPGA. Positions 206 to 220 are enriched in polar residues; it reads RGTSTHPTPGTSATP.

It belongs to the Maf family. A divalent metal cation serves as cofactor.

It is found in the cytoplasm. It catalyses the reaction a ribonucleoside 5'-triphosphate + H2O = a ribonucleoside 5'-phosphate + diphosphate + H(+). The catalysed reaction is a 2'-deoxyribonucleoside 5'-triphosphate + H2O = a 2'-deoxyribonucleoside 5'-phosphate + diphosphate + H(+). Nucleoside triphosphate pyrophosphatase. May have a dual role in cell division arrest and in preventing the incorporation of modified nucleotides into cellular nucleic acids. This chain is Nucleoside triphosphate pyrophosphatase, found in Salinispora tropica (strain ATCC BAA-916 / DSM 44818 / JCM 13857 / NBRC 105044 / CNB-440).